A 356-amino-acid polypeptide reads, in one-letter code: Geranylgeranyl pyrophosphate synthase penG (356 aa).

Isopentenyl diphosphate contacts are provided by K83, R86, and H115. 2 residues coordinate Mg(2+): D122 and D126. A dimethylallyl diphosphate-binding site is contributed by R131. R132 provides a ligand contact to isopentenyl diphosphate. Dimethylallyl diphosphate contacts are provided by K209, T210, and Q243. D246 serves as a coordination point for Mg(2+). Residues N250, K260, and K270 each coordinate dimethylallyl diphosphate.

It belongs to the FPP/GGPP synthase family. The cofactor is Mg(2+).

The enzyme catalyses isopentenyl diphosphate + dimethylallyl diphosphate = (2E)-geranyl diphosphate + diphosphate. The catalysed reaction is isopentenyl diphosphate + (2E)-geranyl diphosphate = (2E,6E)-farnesyl diphosphate + diphosphate. It catalyses the reaction isopentenyl diphosphate + (2E,6E)-farnesyl diphosphate = (2E,6E,10E)-geranylgeranyl diphosphate + diphosphate. It functions in the pathway secondary metabolite biosynthesis. In terms of biological role, geranylgeranyl pyrophosphate synthase; part of the gene cluster that mediates the biosynthesis of the indole diterpenes penitrems. The geranylgeranyl diphosphate (GGPP) synthase ptmG catalyzes the first step in penitrem biosynthesis via conversion of farnesyl pyrophosphate and isopentyl pyrophosphate into geranylgeranyl pyrophosphate (GGPP). Condensation of indole-3-glycerol phosphate with GGPP by the prenyl transferase ptmC then forms 3-geranylgeranylindole (3-GGI). Epoxidation by the FAD-dependent monooxygenase ptmM leads to a epoxidized-GGI that is substrate of the terpene cyclase ptmB for cyclization to yield paspaline. Paspaline is subsequently converted to 13-desoxypaxilline by the cytochrome P450 monooxygenase ptmP, the latter being then converted to paxilline by the cytochrome P450 monooxygenase ptmQ. Paxilline is converted to beta-paxitriol via C-10 ketoreduction by the short-chain dehydrogenase ptmH which can be monoprenylated at the C-20 by the indole diterpene prenyltransferase ptmD. A two-step elimination (acetylation and elimination) process performed by the O-acetyltransferase ptmV and ptmI leads to the production of the prenylated form of penijanthine. The FAD-linked oxidoreductase ptmO then converts the prenylated form of penijanthine into PC-M5 which is in turn transformed into PC-M4 by the aromatic dimethylallyltransferase ptmE. Five sequential oxidative transformations performed by the cytochrome P450 monooxygenases ptmK, ptmU, ptmL, ptmN and ptmJ yield the various penitrem compounds. PtmK, ptmU and ptmM are involved in the formation of the key bicyclic ring of penitrem C via the formation of the intermediates secopenitrem D and penitrem D. PtmL catalyzes the epoxidation of penitrem D and C to yield penitrem B and F, respectively. PtmJ catalyzes the last benzylic hydroxylation to convert penitrem B to prenitrem E and penitrem F to penitrem A. This Penicillium ochrochloron protein is Geranylgeranyl pyrophosphate synthase penG.